The chain runs to 749 residues: Fibronectin type III and SPRY domain-containing protein 2 (749 aa).

The stretch at 205–317 (LNEALESAKD…TIEEMCHEEK (113 aa)) forms a coiled coil. Fibronectin type-III domains are found at residues 375-470 (PVIN…TAPS) and 471-564 (PPII…TIGS). Residues 546-744 (NMGGPSVRSE…KVHNGISMPK (199 aa)) enclose the B30.2/SPRY domain.

Interacts with CMYA5. In cardiac muscles, identified in a complex composed of FSD2, CMYA5 and RYR2.

It localises to the nucleus. The protein localises to the sarcoplasmic reticulum. Its subcellular location is the cytoplasm. The protein resides in the perinuclear region. In Homo sapiens (Human), this protein is Fibronectin type III and SPRY domain-containing protein 2 (FSD2).